A 401-amino-acid chain; its full sequence is MVALVKPHGADELTPLYVADEDARVALQREAETLPSVVISSSAAANAVMMAAGYFTPLTGYMNKADMLSVADNLTTADGLFWPVPILNMLKDVSAIAGAKRIALRDPNVEGEPVIAVMDVAAIEEATDAELEAVAEKVFSTTDKQHPGVANFLAAGNFIVSGDIQVLNYSYFADDFPDTFRTAVSIRNEFVERGWNNVVAFQTRNPMHRAHEELCRMAQEALNADGILIHMLLGKLKAGDIPADVRDASIRKMVDVYFPPNTVMITGYGFDMLYAGPREAVLHAVFRQNCGCSHLIVGRDHAGVGDYYGAFDAQTIFQEKVPAGALEIKIFEADHTAYSKKLDRVVMMRDVPDHTKDDFVLLSGTKVREMLGQGIAPPPEFSRPEVAQILMDYYQALDAGK.

The protein belongs to the sulfate adenylyltransferase family.

The enzyme catalyses sulfate + ATP + H(+) = adenosine 5'-phosphosulfate + diphosphate. Its pathway is sulfur metabolism; hydrogen sulfide biosynthesis; sulfite from sulfate: step 1/3. This Alcanivorax borkumensis (strain ATCC 700651 / DSM 11573 / NCIMB 13689 / SK2) protein is Sulfate adenylyltransferase.